Reading from the N-terminus, the 239-residue chain is Large ribosomal subunit protein uL1 (239 aa).

The protein belongs to the universal ribosomal protein uL1 family. As to quaternary structure, part of the 50S ribosomal subunit.

Binds directly to 23S rRNA. The L1 stalk is quite mobile in the ribosome, and is involved in E site tRNA release. Its function is as follows. Protein L1 is also a translational repressor protein, it controls the translation of the L11 operon by binding to its mRNA. The sequence is that of Large ribosomal subunit protein uL1 from Rickettsia akari (strain Hartford).